The chain runs to 137 residues: Protein PsiE homolog (137 aa).

A run of 4 helical transmembrane segments spans residues 15 to 35, 55 to 75, 82 to 102, and 108 to 128; these read LRITLNLALIMVGFTLVAFLI, YYMTQDILTFFLYFEFIALIV, FHFPLRYFIYIGITAIIRFII, and ATSTLILSGAILLLVAALFLA.

Belongs to the PsiE family.

The protein resides in the cell membrane. In Listeria innocua serovar 6a (strain ATCC BAA-680 / CLIP 11262), this protein is Protein PsiE homolog.